A 148-amino-acid polypeptide reads, in one-letter code: Lysozyme C (148 aa).

Residues 1 to 18 (MKALIILGLVLLSVTVQG) form the signal peptide. Positions 19 to 148 (KIFERCELAR…VSQYVKGCGV (130 aa)) constitute a C-type lysozyme domain. 4 disulfide bridges follow: C24-C146, C48-C134, C83-C99, and C95-C113. Catalysis depends on residues E53 and D71.

Belongs to the glycosyl hydrolase 22 family. As to quaternary structure, monomer.

Its subcellular location is the secreted. It carries out the reaction Hydrolysis of (1-&gt;4)-beta-linkages between N-acetylmuramic acid and N-acetyl-D-glucosamine residues in a peptidoglycan and between N-acetyl-D-glucosamine residues in chitodextrins.. Functionally, lysozymes have primarily a bacteriolytic function; those in tissues and body fluids are associated with the monocyte-macrophage system and enhance the activity of immunoagents. The chain is Lysozyme C (LYZ) from Nasalis larvatus (Proboscis monkey).